The following is a 304-amino-acid chain: Recombination-associated protein RdgC (304 aa).

The protein belongs to the RdgC family.

Its subcellular location is the cytoplasm. It is found in the nucleoid. Its function is as follows. May be involved in recombination. In Shewanella putrefaciens (strain CN-32 / ATCC BAA-453), this protein is Recombination-associated protein RdgC.